We begin with the raw amino-acid sequence, 1415 residues long: DNA-directed RNA polymerase subunit beta'' (1415 aa).

4 residues coordinate Zn(2+): Cys-217, Cys-291, Cys-298, and Cys-301.

It belongs to the RNA polymerase beta' chain family. RpoC2 subfamily. In terms of assembly, in plastids the minimal PEP RNA polymerase catalytic core is composed of four subunits: alpha, beta, beta', and beta''. When a (nuclear-encoded) sigma factor is associated with the core the holoenzyme is formed, which can initiate transcription. Zn(2+) serves as cofactor.

The protein localises to the plastid. It is found in the chloroplast. The catalysed reaction is RNA(n) + a ribonucleoside 5'-triphosphate = RNA(n+1) + diphosphate. DNA-dependent RNA polymerase catalyzes the transcription of DNA into RNA using the four ribonucleoside triphosphates as substrates. In Phaeodactylum tricornutum (strain CCAP 1055/1), this protein is DNA-directed RNA polymerase subunit beta''.